Consider the following 1433-residue polypeptide: MAEVMESVSTAVVPNSSVDWQKRCIALETQLMRFRLQAGNIRHLLAERMQELEQRVIEADQRAESAEKQVHIMEEKLKSANMQPSETENSLYRSYQELSNQIQEKDLIVKRLEGQLEKQNLVRAQEAEIIEEKAAKIKDWVTFKLREMETENQQLKKANLKQTEQILMLQDKLQTLLERPMSPAVDTHLVPSSPLHPPSCPGTPPAQEDCWRLPGCRLNSSADSKRKITEGCDSAFHSASLLPMLQDKADSPKSSQDGVDATSTVKESAEGVEPSFGVMRDRAMGGASDRDHSSDELNSKFRSQCLRSSSSSSSSSSSAYETPGPGGFDTPTPTPKSPPPVSLSPPLTRLPLSCPFPLALPLGTSMTLPKVRTPLTPRDSIQLVKKHHSQPQPGLERLHQVNVSIDIGNCGSPSCHSLVPGSAPSHGLEETDIDEGTPESMEVVVEGSEITEAQPNDGDLLDGLTKELEMMDPEALKPPTPPLHRFPSWESRIYAVAKLGMRVSEACLGAKTIGRVSTQPQHSTTGPFTHLIYKNISVPVYSTLKGKATQISSVPLPDDDSGSEDDSSSLASLHTSTLGPDKKGSTPGSPRAVKRGVSTSSISSESDYAIPPDAYSLDSDCSEPEHKVQRTSSYSCESVGPETLEKTGYLLKMGSQVKAWKRRWFILRNGEILYYKSPSDVIRKPQGQMELNSSCHIARGEGAQTFQLITEKKTFYLAADSPNILEDWIRVLQNVLKVQASGPISMDKEVKPTARGWLTKVKHGHSKLVWCALIGKVFYYYRNQEDKFPLGQLRVREARVEEVDRSCDSDEDYEAGGRGFLSSHFTLVVHPKEQSPTYLLVGTKQEKDTWLYHLTVAAGSSASLRVGTEFEQLIGKLLDVDGVSDSALWKREVLCFSKEGLRYPLTTLPSEALQTEAIKLFKSCQLFINVLVESPSIDYHTSLAQNALQVCLTHPELQNEMYCQLIKQTNCRTPHNYALTQCWQLLSLCVALFLPQHHFLWYLRQYLQRNADPRTEVGKYAVYCQRSVERTLQNGEREAKPSRMEILSILLRNPYHHSLPFSIPVHFMNNTYEVVGFDGSTTVEEFLNTVNQRTGMRKPQISGFALFTDDPSGKDLEHCLQPANKICDVISKWEQALKELHPGKYEGTRTVRLTYKSRLCFRAQAKGETERERLLLAYQVNDEVLQGHFPVSKELALEVAALMAQVEYGDLDRAAMSPVGSPQPKTQQTLLQVLERFYPKRYKQECSVEQLRELGERLVATKWSVLRGCTASECVRIYLTVARKWPLFGAKLFNAKPLPPSSLDRTQVWLAVNEDGLSVLDYTMYPLVTYPYQSVITFGGCKEDFMLVVSLIKDQALGKKTVDKLLFAMAKPKILELTLLIASYINYWTSSLPGASNQTQSSTLGAQGDKKLWDIDSRHFPSMTYTTKGPTLL.

A coiled-coil region spans residues 40–174 (NIRHLLAERM…QILMLQDKLQ (135 aa)). Disordered regions lie at residues 247-346 (DKAD…LSPP) and 552-634 (SSVP…TSSY). Polar residues predominate over residues 252-266 (PKSSQDGVDATSTVK). The span at 279 to 299 (MRDRAMGGASDRDHSSDELNS) shows a compositional bias: basic and acidic residues. Positions 308–318 (SSSSSSSSSSS) are enriched in low complexity. A compositionally biased stretch (pro residues) spans 332–343 (TPTPKSPPPVSL). Over residues 557–567 (PDDDSGSEDDS) the composition is skewed to acidic residues. Residues 568 to 578 (SSLASLHTSTL) are compositionally biased toward low complexity. Positions 597–606 (VSTSSISSES) are enriched in polar residues. 2 consecutive PH domains span residues 643–737 (TLEK…NVLK) and 751–859 (KPTA…VAAG). The 155-residue stretch at 896 to 1050 (FSKEGLRYPL…PSRMEILSIL (155 aa)) folds into the MyTH4 domain. The FERM domain maps to 1061–1392 (FSIPVHFMNN…SYINYWTSSL (332 aa)).

Its function is as follows. Critical component of the guidance pathway underlying endothelial cell migration and blood vessel patterning. Involved in mediating membrane localization of ephrin proteins, which have been shown to provide guidance cues for endothelial cell migration. The polypeptide is Pleckstrin homology domain-containing family H member 1 (plekhh1) (Danio rerio (Zebrafish)).